The primary structure comprises 102 residues: Small ribosomal subunit protein uS10 (102 aa).

It belongs to the universal ribosomal protein uS10 family. Part of the 30S ribosomal subunit.

Involved in the binding of tRNA to the ribosomes. This is Small ribosomal subunit protein uS10 from Thermococcus gammatolerans (strain DSM 15229 / JCM 11827 / EJ3).